The chain runs to 380 residues: Probable inactive dehydrogenase easA (380 aa).

FMN-binding positions include 25 to 27 (PMT), alanine 60, glutamine 102, and histidine 171. Residues histidine 171 and asparagine 174 each contribute to the substrate site. Residues lysine 223, glycine 299, 324 to 325 (GR), and arginine 325 each bind FMN. Substrate is bound at residue tyrosine 352.

The protein belongs to the NADH:flavin oxidoreductase/NADH oxidase family.

Functionally, probable inactive dehydrogenase; part of the gene cluster that mediates the biosynthesis of fungal ergot alkaloid. DmaW catalyzes the first step of ergot alkaloid biosynthesis by condensing dimethylallyl diphosphate (DMAP) and tryptophan to form 4-dimethylallyl-L-tryptophan. The second step is catalyzed by the methyltransferase easF that methylates 4-dimethylallyl-L-tryptophan in the presence of S-adenosyl-L-methionine, resulting in the formation of 4-dimethylallyl-L-abrine. The catalase easC and the FAD-dependent oxidoreductase easE then transform 4-dimethylallyl-L-abrine to chanoclavine-I which is further oxidized by easD in the presence of NAD(+), resulting in the formation of chanoclavine-I aldehyde. Agroclavine dehydrogenase easG then mediates the conversion of chanoclavine-I aldehyde to agroclavine via a non-enzymatic adduct reaction: the substrate is an iminium intermediate that is formed spontaneously from chanoclavine-I aldehyde in the presence of glutathione. The presence of easA is not required to complete this reaction. Further conversion of agroclavine to paspalic acid is a two-step process involving oxidation of agroclavine to elymoclavine and of elymoclavine to paspalic acid, the second step being performed by the elymoclavine oxidase cloA. Paspalic acid is then further converted to D-lysergic acid. Ergopeptines are assembled from D-lysergic acid and three different amino acids by the D-lysergyl-peptide-synthetases composed each of a monomudular and a trimodular nonribosomal peptide synthetase subunit. LpsB and lpsC encode the monomodular subunits responsible for D-lysergic acid activation and incorporation into the ergopeptine backbone. LpsA1 and A2 subunits encode the trimodular nonribosomal peptide synthetase assembling the tripeptide portion of ergopeptines. LpsA1 is responsible for formation of the major ergopeptine, ergotamine, and lpsA2 for alpha-ergocryptine, the minor ergopeptine of the total alkaloid mixture elaborated by C.purpurea. D-lysergyl-tripeptides are assembled by the nonribosomal peptide synthetases and released as N-(D-lysergyl-aminoacyl)-lactams. Cyclolization of the D-lysergyl-tripeptides is performed by the Fe(2+)/2-ketoglutarate-dependent dioxygenase easH which introduces a hydroxyl group into N-(D-lysergyl-aminoacyl)-lactam at alpha-C of the aminoacyl residue followed by spontaneous condensation with the terminal lactam carbonyl group. This Claviceps purpurea (Ergot fungus) protein is Probable inactive dehydrogenase easA.